We begin with the raw amino-acid sequence, 55 residues long: Spermatid nuclear transition protein 1 (55 aa).

Basic residues predominate over residues 1 to 42 (MSTSRKLKSQGMRRGKNRTPHKGVKRSGSKRKYRKSSLKSRK). Residues 1–55 (MSTSRKLKSQGMRRGKNRTPHKGVKRSGSKRKYRKSSLKSRKRCDDANRNLRSHL) form a disordered region. Residues Ser-9, Ser-36, Ser-37, and Ser-40 each carry the phosphoserine modification.

Belongs to the nuclear transition protein 1 family. As to expression, testis.

It localises to the nucleus. The protein localises to the chromosome. Functionally, plays a key role in the replacement of histones to protamine in the elongating spermatids of mammals. In condensing spermatids, loaded onto the nucleosomes, where it promotes the recruitment and processing of protamines, which are responsible for histone eviction. This is Spermatid nuclear transition protein 1 (TNP1) from Bos taurus (Bovine).